We begin with the raw amino-acid sequence, 474 residues long: Probable fucosyltransferase 9 (474 aa).

The helical; Signal-anchor for type II membrane protein transmembrane segment at 1 to 21 (MIKLTIAIATCLVLCLVLLLP) threads the bilayer. Residues 22–474 (SSNISYRHKY…LKLVDVSDEL (453 aa)) lie on the Lumenal side of the membrane. N-linked (GlcNAc...) asparagine glycosylation is found at asparagine 24, asparagine 39, and asparagine 208.

The protein belongs to the glycosyltransferase 37 family. In terms of tissue distribution, expressed in leaves and stems.

The protein localises to the golgi apparatus. The protein resides in the golgi stack membrane. Its pathway is protein modification; protein glycosylation. Functionally, may be involved in cell wall biosynthesis. May act as a fucosyltransferase. In Arabidopsis thaliana (Mouse-ear cress), this protein is Probable fucosyltransferase 9 (FUT9).